The following is a 198-amino-acid chain: MVEKKKSQAEKNNQSATEEEIEKAVKGSKRDSNAADEKNSASAAASSSAVSDAEPAVDYEDKFYRAEAEMQNMQQRFNKERASILKYEGQDLAKSILPALDNLERALSVSAGDPASKKIQDGVELTYKSLSNALTDNGIVKIGRAGDQFDPNLHNAIQKTPIDDPEKQKEGTIAVVLQKGYQLHDRVLRPAMVSVYTK.

The disordered stretch occupies residues 1–56 (MVEKKKSQAEKNNQSATEEEIEKAVKGSKRDSNAADEKNSASAAASSSAVSDAEPA). Over residues 22 to 39 (EKAVKGSKRDSNAADEKN) the composition is skewed to basic and acidic residues. The span at 40 to 56 (SASAAASSSAVSDAEPA) shows a compositional bias: low complexity.

Belongs to the GrpE family. As to quaternary structure, homodimer.

The protein resides in the cytoplasm. Participates actively in the response to hyperosmotic and heat shock by preventing the aggregation of stress-denatured proteins, in association with DnaK and GrpE. It is the nucleotide exchange factor for DnaK and may function as a thermosensor. Unfolded proteins bind initially to DnaJ; upon interaction with the DnaJ-bound protein, DnaK hydrolyzes its bound ATP, resulting in the formation of a stable complex. GrpE releases ADP from DnaK; ATP binding to DnaK triggers the release of the substrate protein, thus completing the reaction cycle. Several rounds of ATP-dependent interactions between DnaJ, DnaK and GrpE are required for fully efficient folding. This Oenococcus oeni (strain ATCC BAA-331 / PSU-1) protein is Protein GrpE.